Consider the following 306-residue polypeptide: D-alanine--D-alanine ligase (306 aa).

Positions 101 to 303 (KLLWQGAGLP…FSQLVVRILE (203 aa)) constitute an ATP-grasp domain. An ATP-binding site is contributed by 134-189 (ISALGLPLIVKPSREGSSVGMTKVVEENALQGALSLAFQHDDEILIEKWLCGPEFT). Asp-257, Glu-270, and Asn-272 together coordinate Mg(2+).

It belongs to the D-alanine--D-alanine ligase family. Mg(2+) is required as a cofactor. Requires Mn(2+) as cofactor.

It is found in the cytoplasm. The catalysed reaction is 2 D-alanine + ATP = D-alanyl-D-alanine + ADP + phosphate + H(+). It participates in cell wall biogenesis; peptidoglycan biosynthesis. In terms of biological role, cell wall formation. This Salmonella paratyphi A (strain ATCC 9150 / SARB42) protein is D-alanine--D-alanine ligase.